The chain runs to 474 residues: tRNA-2-methylthio-N(6)-dimethylallyladenosine synthase (474 aa).

An MTTase N-terminal domain is found at 3-120 (KKLHIKTWGC…LPDMIEQVRR (118 aa)). Residues C12, C49, C83, C157, C161, and C164 each contribute to the [4Fe-4S] cluster site. The region spanning 143-375 (RAEGPTAFVS…QDRITQQAMR (233 aa)) is the Radical SAM core domain. In terms of domain architecture, TRAM spans 378-441 (RHMMGTVQRI…TNSLRGKFIR (64 aa)).

It belongs to the methylthiotransferase family. MiaB subfamily. In terms of assembly, monomer. [4Fe-4S] cluster serves as cofactor.

The protein resides in the cytoplasm. The enzyme catalyses N(6)-dimethylallyladenosine(37) in tRNA + (sulfur carrier)-SH + AH2 + 2 S-adenosyl-L-methionine = 2-methylsulfanyl-N(6)-dimethylallyladenosine(37) in tRNA + (sulfur carrier)-H + 5'-deoxyadenosine + L-methionine + A + S-adenosyl-L-homocysteine + 2 H(+). Its function is as follows. Catalyzes the methylthiolation of N6-(dimethylallyl)adenosine (i(6)A), leading to the formation of 2-methylthio-N6-(dimethylallyl)adenosine (ms(2)i(6)A) at position 37 in tRNAs that read codons beginning with uridine. This is tRNA-2-methylthio-N(6)-dimethylallyladenosine synthase from Shewanella sp. (strain MR-7).